Reading from the N-terminus, the 117-residue chain is Snaclec CHH-B subunit beta (117 aa).

Cystine bridges form between Cys-2–Cys-13, Cys-30–Cys-115, and Cys-92–Cys-107. The 108-residue stretch at 9-116 (YEGHCYRVFQ…CSKTHNVVCK (108 aa)) folds into the C-type lectin domain.

It belongs to the snaclec family. Heterodimer of subunits alpha and beta; disulfide-linked. In terms of tissue distribution, expressed by the venom gland.

It localises to the secreted. Its function is as follows. Binds to the subunit GPIbalpha (GP1BA) of the platelet GPIb/V/IX receptor system. It inhibits ristocetin- and vWF-induced platelet aggregation in platelet-rich plasma by inhibiting the binding of vWF to GPIbalpha. The chain is Snaclec CHH-B subunit beta from Crotalus horridus (Timber rattlesnake).